Here is a 156-residue protein sequence, read N- to C-terminus: MQTSKNQDELVKTFKSILKEERFGSQSEIVVALQGEGFSNINQSKVSRMLSKFGAVRTRNAKQQMVYCLPAELGVPTAGSPLKNLVLDVDHNQSMIVVRTSPGAAQLIARLLDSIGKPEGILGTIAGDDTIFISPSNIQQIEDTLETVKSLFNYTD.

The protein belongs to the ArgR family.

It localises to the cytoplasm. It participates in amino-acid biosynthesis; L-arginine biosynthesis [regulation]. Functionally, regulates arginine biosynthesis genes. The polypeptide is Arginine repressor (Shewanella piezotolerans (strain WP3 / JCM 13877)).